The chain runs to 214 residues: Cell division protein SepF (214 aa).

Residues 23-70 (YYDDRAPSRGFPRPRFDDGYGRYDGDDYDDPRREPADYPPPAGYRGGY) are disordered. Residues 36–58 (PRFDDGYGRYDGDDYDDPRREPA) are compositionally biased toward basic and acidic residues.

It belongs to the SepF family. As to quaternary structure, homodimer. Interacts with FtsZ.

The protein localises to the cytoplasm. Its function is as follows. Cell division protein that is part of the divisome complex and is recruited early to the Z-ring. Probably stimulates Z-ring formation, perhaps through the cross-linking of FtsZ protofilaments. Its function overlaps with FtsA. The polypeptide is Cell division protein SepF (Mycobacterium avium (strain 104)).